An 88-amino-acid polypeptide reads, in one-letter code: Large ribosomal subunit protein bL27 (88 aa).

The disordered stretch occupies residues 1 to 21; sequence MAHKKGTGSTRNGRDSNAKRL.

Belongs to the bacterial ribosomal protein bL27 family.

The chain is Large ribosomal subunit protein bL27 from Parasynechococcus marenigrum (strain WH8102).